The sequence spans 432 residues: Peptidase B (432 aa).

Lys-196 and Asp-201 together coordinate Mn(2+). Residue Lys-208 is part of the active site. 3 residues coordinate Mn(2+): Asp-219, Asp-278, and Glu-280. Arg-282 is a catalytic residue.

This sequence belongs to the peptidase M17 family. Homohexamer. Mn(2+) is required as a cofactor.

The protein localises to the cytoplasm. The enzyme catalyses Release of an N-terminal amino acid, Xaa, from a peptide or arylamide. Xaa is preferably Glu or Asp but may be other amino acids, including Leu, Met, His, Cys and Gln.. Its function is as follows. Probably plays an important role in intracellular peptide degradation. This chain is Peptidase B, found in Vibrio parahaemolyticus serotype O3:K6 (strain RIMD 2210633).